Consider the following 56-residue polypeptide: Large ribosomal subunit protein bL33 (56 aa).

Belongs to the bacterial ribosomal protein bL33 family.

The sequence is that of Large ribosomal subunit protein bL33 from Anaplasma phagocytophilum (strain HZ).